Consider the following 459-residue polypeptide: Cysteine--tRNA ligase (459 aa).

Residue C28 participates in Zn(2+) binding. The 'HIGH' region motif lies at 30 to 40 (VTIYDLCHIGH). 3 residues coordinate Zn(2+): C209, H234, and E238. A 'KMSKS' region motif is present at residues 266-270 (KMSKS). K269 provides a ligand contact to ATP.

It belongs to the class-I aminoacyl-tRNA synthetase family. As to quaternary structure, monomer. Zn(2+) serves as cofactor.

It is found in the cytoplasm. It catalyses the reaction tRNA(Cys) + L-cysteine + ATP = L-cysteinyl-tRNA(Cys) + AMP + diphosphate. The polypeptide is Cysteine--tRNA ligase (Shewanella pealeana (strain ATCC 700345 / ANG-SQ1)).